We begin with the raw amino-acid sequence, 95 residues long: Co-chaperonin GroES (95 aa).

It belongs to the GroES chaperonin family. In terms of assembly, heptamer of 7 subunits arranged in a ring. Interacts with the chaperonin GroEL.

It localises to the cytoplasm. In terms of biological role, together with the chaperonin GroEL, plays an essential role in assisting protein folding. The GroEL-GroES system forms a nano-cage that allows encapsulation of the non-native substrate proteins and provides a physical environment optimized to promote and accelerate protein folding. GroES binds to the apical surface of the GroEL ring, thereby capping the opening of the GroEL channel. The sequence is that of Co-chaperonin GroES from Rickettsia canadensis (strain McKiel).